A 494-amino-acid polypeptide reads, in one-letter code: Aspartyl/glutamyl-tRNA(Asn/Gln) amidotransferase subunit B (494 aa).

The protein belongs to the GatB/GatE family. GatB subfamily. In terms of assembly, heterotrimer of A, B and C subunits.

It catalyses the reaction L-glutamyl-tRNA(Gln) + L-glutamine + ATP + H2O = L-glutaminyl-tRNA(Gln) + L-glutamate + ADP + phosphate + H(+). The enzyme catalyses L-aspartyl-tRNA(Asn) + L-glutamine + ATP + H2O = L-asparaginyl-tRNA(Asn) + L-glutamate + ADP + phosphate + 2 H(+). Allows the formation of correctly charged Asn-tRNA(Asn) or Gln-tRNA(Gln) through the transamidation of misacylated Asp-tRNA(Asn) or Glu-tRNA(Gln) in organisms which lack either or both of asparaginyl-tRNA or glutaminyl-tRNA synthetases. The reaction takes place in the presence of glutamine and ATP through an activated phospho-Asp-tRNA(Asn) or phospho-Glu-tRNA(Gln). The protein is Aspartyl/glutamyl-tRNA(Asn/Gln) amidotransferase subunit B of Rhodopseudomonas palustris (strain BisA53).